A 154-amino-acid polypeptide reads, in one-letter code: Ribosome maturation factor RimP (154 aa).

The protein belongs to the RimP family.

The protein resides in the cytoplasm. Functionally, required for maturation of 30S ribosomal subunits. This is Ribosome maturation factor RimP from Prochlorococcus marinus (strain MIT 9313).